The following is a 216-amino-acid chain: Putative F-box protein At2g03610 (216 aa).

One can recognise an F-box domain in the interval 19–69; the sequence is NQDWSKLCPDLLRPILESLSSIDFHRAKTVCSDWYSVWKTCKGYDSKWNQN.

This chain is Putative F-box protein At2g03610, found in Arabidopsis thaliana (Mouse-ear cress).